The following is a 674-amino-acid chain: DNA mismatch repair protein MutL (674 aa).

The protein belongs to the DNA mismatch repair MutL/HexB family.

This protein is involved in the repair of mismatches in DNA. It is required for dam-dependent methyl-directed DNA mismatch repair. May act as a 'molecular matchmaker', a protein that promotes the formation of a stable complex between two or more DNA-binding proteins in an ATP-dependent manner without itself being part of a final effector complex. In Clostridium perfringens (strain 13 / Type A), this protein is DNA mismatch repair protein MutL.